The chain runs to 601 residues: RNA polymerase II C-terminal domain phosphatase-like 5 (601 aa).

The tract at residues 1–20 (MFVAKNLSPERESKRQKKEP) is disordered. A compositionally biased stretch (basic and acidic residues) spans 8–20 (SPERESKRQKKEP). 2 consecutive FCP1 homology domains span residues 84 to 259 (LNMK…TDES) and 381 to 553 (LNEK…DESE).

Expressed in roots, seedlings, hypocotyls, cotyledons, leaves, siliques and flowers.

The protein localises to the nucleus. It carries out the reaction O-phospho-L-seryl-[protein] + H2O = L-seryl-[protein] + phosphate. It catalyses the reaction O-phospho-L-threonyl-[protein] + H2O = L-threonyl-[protein] + phosphate. Mediates the dephosphorylation of 'Ser-2' of the heptad repeats YSPTSPS in the C-terminal domain of the largest RNA polymerase II subunit (RPB1). This promotes the activity of RNA polymerase II. Positively regulates abscisic acid (ABA) and drought responses, including the regulation of specific genes expression. The polypeptide is RNA polymerase II C-terminal domain phosphatase-like 5 (Arabidopsis thaliana (Mouse-ear cress)).